A 361-amino-acid chain; its full sequence is BBSome complex member bbs-5 (361 aa).

This sequence belongs to the BBS5 family. As to quaternary structure, part of BBSome complex, that contains at least bbs-1, bbs-2, bbs-4, bbs-5, osm-12, bbs-8/ttc-8 and bbs-9. Interacts with bbs-4 (via C-terminus); the interaction is direct.

The protein resides in the cell projection. Its subcellular location is the cilium membrane. It is found in the cytoplasm. It localises to the cytoskeleton. The protein localises to the cilium basal body. The protein resides in the microtubule organizing center. Its subcellular location is the centrosome. It is found in the centriolar satellite. In terms of biological role, component of the BBSome complex. The BBSome complex is thought to function as a coat complex required for sorting of specific membrane proteins to the primary cilia. The BBSome complex is required for ciliogenesis but is dispensable for centriolar satellite function. Required for BBSome complex ciliary localization but not for the proper complex assembly. Required, redundantly with bbs-4, for cilia biogenesis and both the assembly and movement of intraflagellar transport proteins along the ciliary axoneme. Plays a role in the removal of degraded mechanosensory receptors within the cilia. The protein is BBSome complex member bbs-5 of Caenorhabditis elegans.